The following is a 292-amino-acid chain: Ribosomal RNA small subunit methyltransferase A (292 aa).

Residues N28, L30, G55, E76, D101, and N126 each coordinate S-adenosyl-L-methionine.

The protein belongs to the class I-like SAM-binding methyltransferase superfamily. rRNA adenine N(6)-methyltransferase family. RsmA subfamily.

The protein localises to the cytoplasm. It carries out the reaction adenosine(1518)/adenosine(1519) in 16S rRNA + 4 S-adenosyl-L-methionine = N(6)-dimethyladenosine(1518)/N(6)-dimethyladenosine(1519) in 16S rRNA + 4 S-adenosyl-L-homocysteine + 4 H(+). Specifically dimethylates two adjacent adenosines (A1518 and A1519) in the loop of a conserved hairpin near the 3'-end of 16S rRNA in the 30S particle. May play a critical role in biogenesis of 30S subunits. The polypeptide is Ribosomal RNA small subunit methyltransferase A (Bacillus thuringiensis (strain Al Hakam)).